The following is a 46-amino-acid chain: RECRSESKKFVGLCVSDTNCASVCLTERFPGGKCDGYRRCFCTKDC.

4 disulfide bridges follow: Cys3–Cys46, Cys14–Cys34, Cys20–Cys40, and Cys24–Cys42.

In terms of biological role, plant defense peptide. This is Defensin Tk-AMP-D5 from Triticum kiharae (Wheat).